Here is a 256-residue protein sequence, read N- to C-terminus: CD209 antigen-like protein 2 (256 aa).

The Cytoplasmic segment spans residues 1–50 (MSDSKEPRAQPLGLLEEEELITSSMNFFPRDFGFRQTRGYKSLAGCLGHA). The Endocytosis signal motif lies at 14 to 15 (LL). A helical; Signal-anchor for type II membrane protein transmembrane segment spans residues 51 to 71 (PLVLPLLFFTLFTGLLVAILV). The Extracellular portion of the chain corresponds to 72–240 (QVSKNPSSQR…KSAASCSRDE (169 aa)). Cystine bridges form between C108–C119, C136–C229, and C208–C221. A C-type lectin domain is found at 114-230 (FFQGNCYFIS…CSAAKFWICK (117 aa)). Positions 199, 201, 203, 206, 217, and 218 each coordinate Ca(2+).

As to expression, predominantly expressed in liver and axillary lymph nodes. At very low levels also found in other tissues.

It is found in the membrane. Functionally, probable pathogen-recognition receptor involved in peripheral immune surveillance in liver. May mediate the endocytosis of pathogens which are subsequently degraded in lysosomal compartments. Probably recognizes in a calcium-dependent manner high mannose N-linked oligosaccharides in a variety of pathogen antigens. Is a receptor for ICAM3, probably by binding to mannose-like carbohydrates. The protein is CD209 antigen-like protein 2 (CD209L2) of Macaca mulatta (Rhesus macaque).